The chain runs to 207 residues: Ribosomal RNA large subunit methyltransferase E (207 aa).

Residues Gly60, Trp62, Asp80, Asp96, and Asp121 each coordinate S-adenosyl-L-methionine. Lys161 functions as the Proton acceptor in the catalytic mechanism.

Belongs to the class I-like SAM-binding methyltransferase superfamily. RNA methyltransferase RlmE family.

The protein resides in the cytoplasm. The catalysed reaction is uridine(2552) in 23S rRNA + S-adenosyl-L-methionine = 2'-O-methyluridine(2552) in 23S rRNA + S-adenosyl-L-homocysteine + H(+). In terms of biological role, specifically methylates the uridine in position 2552 of 23S rRNA at the 2'-O position of the ribose in the fully assembled 50S ribosomal subunit. The chain is Ribosomal RNA large subunit methyltransferase E from Thioalkalivibrio sulfidiphilus (strain HL-EbGR7).